The following is a 370-amino-acid chain: 3-dehydroquinate synthase (370 aa).

Residues 108–112, 132–133, lysine 145, and lysine 154 each bind NAD(+); these read GVVGD and TT. Zn(2+)-binding residues include glutamate 187, histidine 250, and histidine 268.

This sequence belongs to the sugar phosphate cyclases superfamily. Dehydroquinate synthase family. Co(2+) is required as a cofactor. The cofactor is Zn(2+). It depends on NAD(+) as a cofactor.

Its subcellular location is the cytoplasm. It catalyses the reaction 7-phospho-2-dehydro-3-deoxy-D-arabino-heptonate = 3-dehydroquinate + phosphate. It functions in the pathway metabolic intermediate biosynthesis; chorismate biosynthesis; chorismate from D-erythrose 4-phosphate and phosphoenolpyruvate: step 2/7. Catalyzes the conversion of 3-deoxy-D-arabino-heptulosonate 7-phosphate (DAHP) to dehydroquinate (DHQ). The polypeptide is 3-dehydroquinate synthase (Caulobacter vibrioides (strain NA1000 / CB15N) (Caulobacter crescentus)).